The chain runs to 864 residues: Eukaryotic translation initiation factor 3 subunit C (864 aa).

The interval 1-77 (MSRFFARGGS…EESEDEERVT (77 aa)) is disordered. Over residues 14-54 (SSSEDEQELYSDREEEEQFSDSEEESSEAESSEEESSDDEG) the composition is skewed to acidic residues. The 175-residue stretch at 602–776 (FHMHINLELL…NAIVFRKGVE (175 aa)) folds into the PCI domain. Residues 815–864 (RDQGAGARGGRGAGRGGQARGGPRFPGGQQGRRPGGQQFSGGALGGAIKA) are disordered. Positions 820 to 864 (GARGGRGAGRGGQARGGPRFPGGQQGRRPGGQQFSGGALGGAIKA) are enriched in gly residues.

This sequence belongs to the eIF-3 subunit C family. As to quaternary structure, component of the eukaryotic translation initiation factor 3 (eIF-3) complex.

The protein localises to the cytoplasm. Its function is as follows. Component of the eukaryotic translation initiation factor 3 (eIF-3) complex, which is involved in protein synthesis of a specialized repertoire of mRNAs and, together with other initiation factors, stimulates binding of mRNA and methionyl-tRNAi to the 40S ribosome. The eIF-3 complex specifically targets and initiates translation of a subset of mRNAs involved in cell proliferation. The polypeptide is Eukaryotic translation initiation factor 3 subunit C (nip1) (Aspergillus terreus (strain NIH 2624 / FGSC A1156)).